We begin with the raw amino-acid sequence, 122 residues long: Atrial gland peptide B (122 aa).

An N-terminal signal peptide occupies residues 1–21; sequence MKANTMFIILCLTLSTLCVSS. A propeptide spanning residues 22 to 34 is cleaved from the precursor; it reads QFTSVLGKIFVTN. The residue at position 69 (isoleucine 69) is an Isoleucine amide. The propeptide occupies 73 to 122; the sequence is AAGGMEQSEGQNPETKSHSWRERSVLTPSLLSLGESLESGISKRISINQD. The segment at 74-95 is disordered; the sequence is AGGMEQSEGQNPETKSHSWRER.

This sequence belongs to the molluscan ELH family.

It is found in the secreted. In terms of biological role, the atrial gland peptide A and peptide B precursors are the source of the 2 peptides that, upon release from this reproductive system gland, initiate the egg-laying process by exciting the bag cell neurons. These neurons, clustered in neural connectives near the abdominal ganglion, in turn release other peptides that act directly on the ganglion and also, via the circulating hemolymph, on many other organs to control the physiological processes of egg-laying. One of these other peptides is the egg-laying hormone. In Aplysia californica (California sea hare), this protein is Atrial gland peptide B.